We begin with the raw amino-acid sequence, 179 residues long: Large ribosomal subunit protein uL6 (179 aa).

This sequence belongs to the universal ribosomal protein uL6 family. As to quaternary structure, part of the 50S ribosomal subunit.

Functionally, this protein binds to the 23S rRNA, and is important in its secondary structure. It is located near the subunit interface in the base of the L7/L12 stalk, and near the tRNA binding site of the peptidyltransferase center. This Crocosphaera subtropica (strain ATCC 51142 / BH68) (Cyanothece sp. (strain ATCC 51142)) protein is Large ribosomal subunit protein uL6.